We begin with the raw amino-acid sequence, 166 residues long: Large ribosomal subunit protein uL10 (166 aa).

Belongs to the universal ribosomal protein uL10 family. As to quaternary structure, part of the ribosomal stalk of the 50S ribosomal subunit. The N-terminus interacts with L11 and the large rRNA to form the base of the stalk. The C-terminus forms an elongated spine to which L12 dimers bind in a sequential fashion forming a multimeric L10(L12)X complex.

Functionally, forms part of the ribosomal stalk, playing a central role in the interaction of the ribosome with GTP-bound translation factors. The sequence is that of Large ribosomal subunit protein uL10 from Streptococcus pyogenes serotype M28 (strain MGAS6180).